We begin with the raw amino-acid sequence, 147 residues long: Nucleoside diphosphate kinase (147 aa).

Residues Lys11, Phe59, Arg87, Thr93, Arg104, and Asn114 each contribute to the ATP site. Catalysis depends on His117, which acts as the Pros-phosphohistidine intermediate.

Belongs to the NDK family. As to quaternary structure, homotetramer. The cofactor is Mg(2+).

Its subcellular location is the cytoplasm. It catalyses the reaction a 2'-deoxyribonucleoside 5'-diphosphate + ATP = a 2'-deoxyribonucleoside 5'-triphosphate + ADP. It carries out the reaction a ribonucleoside 5'-diphosphate + ATP = a ribonucleoside 5'-triphosphate + ADP. Functionally, major role in the synthesis of nucleoside triphosphates other than ATP. The ATP gamma phosphate is transferred to the NDP beta phosphate via a ping-pong mechanism, using a phosphorylated active-site intermediate. This Anaeromyxobacter dehalogenans (strain 2CP-1 / ATCC BAA-258) protein is Nucleoside diphosphate kinase.